A 226-amino-acid chain; its full sequence is Chalcone--flavanone isomerase 3 (226 aa).

Residues threonine 49, asparagine 114, and serine 191 each coordinate substrate.

Belongs to the chalcone isomerase family.

The catalysed reaction is a chalcone = a flavanone.. It functions in the pathway secondary metabolite biosynthesis; flavonoid biosynthesis. Functionally, catalyzes the intramolecular cyclization of bicyclic chalcones into tricyclic (S)-flavanones. Responsible for the isomerization of 4,2',4',6'-tetrahydroxychalcone (also termed chalcone) into naringenin. In Glycine max (Soybean), this protein is Chalcone--flavanone isomerase 3 (CHI3).